The primary structure comprises 404 residues: Bifunctional enzyme IspD/IspF (404 aa).

The interval 1–243 (MQAEEQFSCG…KLTRMAIPDV (243 aa)) is 2-C-methyl-D-erythritol 4-phosphate cytidylyltransferase. Positions 244–404 (RTGNGYDVHQ…TVVYASGGDA (161 aa)) are 2-C-methyl-D-erythritol 2,4-cyclodiphosphate synthase. D250 and H252 together coordinate a divalent metal cation. Residues 250–252 (DVH) and 276–277 (HS) contribute to the 4-CDP-2-C-methyl-D-erythritol 2-phosphate site. H284 serves as a coordination point for a divalent metal cation. 4-CDP-2-C-methyl-D-erythritol 2-phosphate contacts are provided by residues 298-300 (DIG), 374-377 (TTNE), F381, and R384.

The protein in the N-terminal section; belongs to the IspD/TarI cytidylyltransferase family. IspD subfamily. This sequence in the C-terminal section; belongs to the IspF family. A divalent metal cation serves as cofactor.

The enzyme catalyses 2-C-methyl-D-erythritol 4-phosphate + CTP + H(+) = 4-CDP-2-C-methyl-D-erythritol + diphosphate. The catalysed reaction is 4-CDP-2-C-methyl-D-erythritol 2-phosphate = 2-C-methyl-D-erythritol 2,4-cyclic diphosphate + CMP. It participates in isoprenoid biosynthesis; isopentenyl diphosphate biosynthesis via DXP pathway; isopentenyl diphosphate from 1-deoxy-D-xylulose 5-phosphate: step 2/6. It functions in the pathway isoprenoid biosynthesis; isopentenyl diphosphate biosynthesis via DXP pathway; isopentenyl diphosphate from 1-deoxy-D-xylulose 5-phosphate: step 4/6. Functionally, bifunctional enzyme that catalyzes the formation of 4-diphosphocytidyl-2-C-methyl-D-erythritol from CTP and 2-C-methyl-D-erythritol 4-phosphate (MEP) (IspD), and catalyzes the conversion of 4-diphosphocytidyl-2-C-methyl-D-erythritol 2-phosphate (CDP-ME2P) to 2-C-methyl-D-erythritol 2,4-cyclodiphosphate (ME-CPP) with a corresponding release of cytidine 5-monophosphate (CMP) (IspF). In Sinorhizobium medicae (strain WSM419) (Ensifer medicae), this protein is Bifunctional enzyme IspD/IspF.